The chain runs to 428 residues: Trigger factor (428 aa).

In terms of domain architecture, PPIase FKBP-type spans 165–240; it reads ADLIKLDAEG…VKEVKRMELP (76 aa).

Belongs to the FKBP-type PPIase family. Tig subfamily.

Its subcellular location is the cytoplasm. The catalysed reaction is [protein]-peptidylproline (omega=180) = [protein]-peptidylproline (omega=0). Functionally, involved in protein export. Acts as a chaperone by maintaining the newly synthesized protein in an open conformation. Functions as a peptidyl-prolyl cis-trans isomerase. This Prosthecochloris aestuarii (strain DSM 271 / SK 413) protein is Trigger factor.